The primary structure comprises 187 residues: Adenylate kinase 1 (187 aa).

14–19 is an ATP binding site; it reads GSGKGT. An NMP region spans residues 34–63; sequence STGDMLRQAIADGTELGNQAKGYMDKGELV. Residues T35, R40, 61-63, 89-92, and Q96 contribute to the AMP site; these read ELV and GFPR. The interval 130–136 is LID; the sequence is ARGRADD. An ATP-binding site is contributed by R131. Residues R133 and R144 each contribute to the AMP site. ATP is bound at residue Q172.

This sequence belongs to the adenylate kinase family. As to quaternary structure, monomer.

The protein resides in the cytoplasm. The enzyme catalyses AMP + ATP = 2 ADP. It functions in the pathway purine metabolism; AMP biosynthesis via salvage pathway; AMP from ADP: step 1/1. Its function is as follows. Catalyzes the reversible transfer of the terminal phosphate group between ATP and AMP. Plays an important role in cellular energy homeostasis and in adenine nucleotide metabolism. The sequence is that of Adenylate kinase 1 from Synechocystis sp. (strain ATCC 27184 / PCC 6803 / Kazusa).